The chain runs to 713 residues: Ribosomal RNA large subunit methyltransferase K/L (713 aa).

The region spanning 43-154 is the THUMP domain; that stretch reads LAYRITLWTR…NGVITIAMNF (112 aa).

This sequence belongs to the methyltransferase superfamily. RlmKL family.

The protein localises to the cytoplasm. It catalyses the reaction guanosine(2445) in 23S rRNA + S-adenosyl-L-methionine = N(2)-methylguanosine(2445) in 23S rRNA + S-adenosyl-L-homocysteine + H(+). The enzyme catalyses guanosine(2069) in 23S rRNA + S-adenosyl-L-methionine = N(2)-methylguanosine(2069) in 23S rRNA + S-adenosyl-L-homocysteine + H(+). In terms of biological role, specifically methylates the guanine in position 2445 (m2G2445) and the guanine in position 2069 (m7G2069) of 23S rRNA. In Shewanella sp. (strain ANA-3), this protein is Ribosomal RNA large subunit methyltransferase K/L.